We begin with the raw amino-acid sequence, 285 residues long: AT-hook motif nuclear-localized protein 21 (285 aa).

The segment at 17-95 is disordered; it reads DGGGGGQFTT…GSKNKPKPPV (79 aa). Residues 39–50 show a composition bias toward basic residues; the sequence is NHHHHHHNHNHH. The span at 63–73 shows a compositional bias: gly residues; that stretch reads GLGGGGGGGSG. Residues 78-90 constitute a DNA-binding region (a.T hook); the sequence is RRPRGRPAGSKNK. In terms of domain architecture, PPC spans 102–238; sequence ANTLRAHILE…EHEEHLQSGG (137 aa).

Preferentially expressed in roots, but also in flowers and leaves. Detected in the inflorescence meristem, floral primordia and developing reproductive organs.

The protein localises to the nucleus. Its subcellular location is the nucleoplasm. Functionally, transcription factor that specifically binds AT-rich DNA sequences related to the nuclear matrix attachment regions (MARs). Binds to the MARs present in the ETTIN (ETT) promoter leading to a negative regulation of its gene expression. Functions as a molecular node downstream of the homeotic protein AGAMOUS (AG), regulating patterning and differentiation of reproductive organs. Acts as a chromatin remodeling factor that modifies the architecture of ETTIN (ETT) chromatin by modulating H3 methylation leading to the regulation of ETT expression. Seems to be involved in the regulation of a set of reproductives genes including CRABS CLAW (CRC), JAGGED (JAG) and KNUCKLES (KNU). The protein is AT-hook motif nuclear-localized protein 21 of Arabidopsis thaliana (Mouse-ear cress).